We begin with the raw amino-acid sequence, 267 residues long: B3 domain-containing protein At3g11580 (267 aa).

Positions 29 to 143 form a DNA-binding region, TF-B3; the sequence is FEKSLTPSDV…RLFIGWRRRG (115 aa).

The protein localises to the nucleus. This is B3 domain-containing protein At3g11580 (ARF32) from Arabidopsis thaliana (Mouse-ear cress).